The following is a 513-amino-acid chain: Gluconokinase (513 aa).

Residues Lys16, Thr261, Gly300, and 412–416 (GFARS) contribute to the ATP site.

It belongs to the FGGY kinase family.

The catalysed reaction is D-gluconate + ATP = 6-phospho-D-gluconate + ADP + H(+). It functions in the pathway carbohydrate acid metabolism; D-gluconate degradation. Its activity is regulated as follows. Catabolite repression by gluconate. The sequence is that of Gluconokinase (gntK) from Bacillus subtilis (strain 168).